Reading from the N-terminus, the 233-residue chain is Ribonuclease 3 (233 aa).

Residues 9 to 136 (LQHFWEQFHL…IIGSVYLSGG (128 aa)) enclose the RNase III domain. E49 lines the Mg(2+) pocket. D53 is an active-site residue. Mg(2+)-binding residues include D122 and E125. E125 is a catalytic residue. A DRBM domain is found at 162–231 (DSKSALQEFV…ARAALALLKV (70 aa)).

The protein belongs to the ribonuclease III family. As to quaternary structure, homodimer. Requires Mg(2+) as cofactor.

It is found in the cytoplasm. The catalysed reaction is Endonucleolytic cleavage to 5'-phosphomonoester.. Its function is as follows. Digests double-stranded RNA. Involved in the processing of primary rRNA transcript to yield the immediate precursors to the large and small rRNAs (23S and 16S). Processes some mRNAs, and tRNAs when they are encoded in the rRNA operon. Processes pre-crRNA and tracrRNA of type II CRISPR loci if present in the organism. In Moorella thermoacetica (strain ATCC 39073 / JCM 9320), this protein is Ribonuclease 3.